Here is a 119-residue protein sequence, read N- to C-terminus: Large ribosomal subunit protein bL17 (119 aa).

It belongs to the bacterial ribosomal protein bL17 family. Part of the 50S ribosomal subunit. Contacts protein L32.

This Mycoplasma mycoides subsp. mycoides SC (strain CCUG 32753 / NCTC 10114 / PG1) protein is Large ribosomal subunit protein bL17.